A 352-amino-acid chain; its full sequence is Probable dual-specificity RNA methyltransferase RlmN (352 aa).

Glutamate 99 functions as the Proton acceptor in the catalytic mechanism. Residues 105–325 (EGDRATLCIS…ESHGYTCTIR (221 aa)) enclose the Radical SAM core domain. An intrachain disulfide couples cysteine 112 to cysteine 336. [4Fe-4S] cluster-binding residues include cysteine 119, cysteine 123, and cysteine 126. S-adenosyl-L-methionine-binding positions include 164 to 165 (GE), serine 196, 217 to 219 (SLH), and histidine 293. The S-methylcysteine intermediate role is filled by cysteine 336.

It belongs to the radical SAM superfamily. RlmN family. It depends on [4Fe-4S] cluster as a cofactor.

It localises to the cytoplasm. It catalyses the reaction adenosine(2503) in 23S rRNA + 2 reduced [2Fe-2S]-[ferredoxin] + 2 S-adenosyl-L-methionine = 2-methyladenosine(2503) in 23S rRNA + 5'-deoxyadenosine + L-methionine + 2 oxidized [2Fe-2S]-[ferredoxin] + S-adenosyl-L-homocysteine. It carries out the reaction adenosine(37) in tRNA + 2 reduced [2Fe-2S]-[ferredoxin] + 2 S-adenosyl-L-methionine = 2-methyladenosine(37) in tRNA + 5'-deoxyadenosine + L-methionine + 2 oxidized [2Fe-2S]-[ferredoxin] + S-adenosyl-L-homocysteine. Specifically methylates position 2 of adenine 2503 in 23S rRNA and position 2 of adenine 37 in tRNAs. This chain is Probable dual-specificity RNA methyltransferase RlmN, found in Porphyromonas gingivalis (strain ATCC 33277 / DSM 20709 / CIP 103683 / JCM 12257 / NCTC 11834 / 2561).